A 133-amino-acid chain; its full sequence is Ribosome-binding factor A (133 aa).

It belongs to the RbfA family. As to quaternary structure, monomer. Binds 30S ribosomal subunits, but not 50S ribosomal subunits or 70S ribosomes.

The protein localises to the cytoplasm. One of several proteins that assist in the late maturation steps of the functional core of the 30S ribosomal subunit. Associates with free 30S ribosomal subunits (but not with 30S subunits that are part of 70S ribosomes or polysomes). Required for efficient processing of 16S rRNA. May interact with the 5'-terminal helix region of 16S rRNA. The chain is Ribosome-binding factor A from Acinetobacter baumannii (strain AB307-0294).